Here is a 145-residue protein sequence, read N- to C-terminus: uncharacterized protein (145 aa).

The signal sequence occupies residues 1-22; it reads MLTRLVLSAHLSSTTSPPWTHA. N-linked (GlcNAc...) asparagine glycosylation is present at Asn-98. The disordered stretch occupies residues 103 to 145; that stretch reads SSGQQRQAARQEEENSICKAHDSREGRLGYPLSAHQPGSGGPN.

It localises to the secreted. This is an uncharacterized protein from Homo sapiens (Human).